The sequence spans 261 residues: Ribonuclease PH (261 aa).

Phosphate is bound by residues Arg87 and Gly125–Arg127.

The protein belongs to the RNase PH family. Homohexameric ring arranged as a trimer of dimers.

The enzyme catalyses tRNA(n+1) + phosphate = tRNA(n) + a ribonucleoside 5'-diphosphate. In terms of biological role, phosphorolytic 3'-5' exoribonuclease that plays an important role in tRNA 3'-end maturation. Removes nucleotide residues following the 3'-CCA terminus of tRNAs; can also add nucleotides to the ends of RNA molecules by using nucleoside diphosphates as substrates, but this may not be physiologically important. Probably plays a role in initiation of 16S rRNA degradation (leading to ribosome degradation) during starvation. The chain is Ribonuclease PH from Desulforudis audaxviator (strain MP104C).